The sequence spans 107 residues: Glutaredoxin 4 (107 aa).

The 103-residue stretch at 4-106 (IEKIERQIKD…KIISNAVLNS (103 aa)) folds into the Glutaredoxin domain. Lys-21 serves as a coordination point for glutathione. Residue Cys-29 participates in [2Fe-2S] cluster binding. Residues Arg-58, Phe-70, and 83 to 84 (CS) each bind glutathione.

Belongs to the glutaredoxin family. Monothiol subfamily. In terms of assembly, homodimer.

The protein resides in the cytoplasm. In terms of biological role, monothiol glutaredoxin involved in the biogenesis of iron-sulfur clusters. The polypeptide is Glutaredoxin 4 (grxD) (Buchnera aphidicola subsp. Schizaphis graminum (strain Sg)).